Here is a 73-residue protein sequence, read N- to C-terminus: uncharacterized protein (73 aa).

The segment at 1–32 is disordered; it reads MFLSSAVRKDSNGVRHLPSVQRWTPGSPPTRA.

This is an uncharacterized protein from Frog virus 3 (isolate Goorha) (FV-3).